The sequence spans 387 residues: Beta-carotene 4-ketolase (387 aa).

Residues 1–78 (MPHSIDMEDS…GNPTVDDASQ (78 aa)) are disordered. Polar residues-rich tracts occupy residues 43–53 (NWQTQYHSSEG) and 65–78 (DATTGNPTVDDASQ).

The enzyme catalyses echinenone + 2 AH2 + 2 O2 = canthaxanthin + 2 A + 3 H2O. The catalysed reaction is all-trans-beta-carotene + 2 AH2 + 2 O2 = echinenone + 2 A + 3 H2O. The protein operates within carotenoid biosynthesis. In terms of biological role, involved in the biosynthesis of ketocarotenoids which are powerful anti-oxidative molecules. Catalyzes the conversion of beta-carotene to canthaxanthin via echinenone. This is Beta-carotene 4-ketolase from Protosiphon botryoides (Green alga).